The primary structure comprises 111 residues: Secreted transmembrane peptide 5 (111 aa).

The signal sequence occupies residues methionine 1–serine 46. Residues isoleucine 66 to proline 79 carry the SCOOP motif motif. The SxS motif essential for MIK2 binding motif lies at serine 72 to serine 74. Residues threonine 89–proline 111 form a disordered region.

This sequence belongs to the serine rich endogenous peptide (SCOOP) phytocytokine family. In terms of assembly, interacts with MIK2 (via extracellular leucine-rich repeat domain); this interaction triggers the formation of complex between MIK2 and the BAK1/SERK3 and SERK4 coreceptors, and subsequent BAK1 activation by phosphorylation. In terms of tissue distribution, mostly expressed in leaves, and, to a lower extent, in roots, stems, siliques, seeds and flowers.

It is found in the cell membrane. The protein localises to the secreted. The protein resides in the extracellular space. Its subcellular location is the apoplast. Brassicaceae-specific phytocytokine (plant endogenous peptide released into the apoplast) perceived by MIK2 in a BAK1/SERK3 and SERK4 coreceptors-dependent manner, that modulates various physiological and antimicrobial processes including growth prevention and reactive oxygen species (ROS) response regulation. This is Secreted transmembrane peptide 5 from Arabidopsis thaliana (Mouse-ear cress).